Here is a 171-residue protein sequence, read N- to C-terminus: MSNSSLTLKQSGLRWLWLALLVFIADITIKLIVMDNMGYGWANRIEVLPFFNLLYVHNYGAAFSFLSDQEGWQRWLFTGIAFVVTGMLAYWMRRLPASDKWNNIAYALIIGGAVGNVFDRIVHGFVVDYLDFYWGTYHWPAFNLADSTICIGAAMIILDGFRAKKSAPSQS.

4 consecutive transmembrane segments (helical) span residues 15-35, 47-67, 72-92, and 107-127; these read WLWLALLVFIADITIKLIVMD, VLPFFNLLYVHNYGAAFSFLS, WQRWLFTGIAFVVTGMLAYWM, and ALIIGGAVGNVFDRIVHGFVV. Catalysis depends on residues Asp-128 and Asp-146. Residues 141-161 form a helical membrane-spanning segment; it reads AFNLADSTICIGAAMIILDGF.

The protein belongs to the peptidase A8 family.

It localises to the cell inner membrane. It catalyses the reaction Release of signal peptides from bacterial membrane prolipoproteins. Hydrolyzes -Xaa-Yaa-Zaa-|-(S,diacylglyceryl)Cys-, in which Xaa is hydrophobic (preferably Leu), and Yaa (Ala or Ser) and Zaa (Gly or Ala) have small, neutral side chains.. The protein operates within protein modification; lipoprotein biosynthesis (signal peptide cleavage). This protein specifically catalyzes the removal of signal peptides from prolipoproteins. This chain is Lipoprotein signal peptidase, found in Vibrio cholerae serotype O1 (strain ATCC 39541 / Classical Ogawa 395 / O395).